The sequence spans 250 residues: uncharacterized protein (250 aa).

The span at 207-226 (LNDRDAINKSEEARKAREEV) shows a compositional bias: basic and acidic residues. Positions 207-250 (LNDRDAINKSEEARKAREEVFIPSEPSKPSIASKRSSASKSTKS) are disordered. Over residues 233–250 (SKPSIASKRSSASKSTKS) the composition is skewed to low complexity.

The protein localises to the plastid. The protein resides in the chloroplast. This is an uncharacterized protein from Chlorella vulgaris (Green alga).